The sequence spans 434 residues: D-amino acid dehydrogenase (434 aa).

3–17 (VIILGGGVIGVTSAW) is an FAD binding site.

Belongs to the DadA oxidoreductase family. The cofactor is FAD.

It carries out the reaction a D-alpha-amino acid + A + H2O = a 2-oxocarboxylate + AH2 + NH4(+). The protein operates within amino-acid degradation; D-alanine degradation; NH(3) and pyruvate from D-alanine: step 1/1. Oxidative deamination of D-amino acids. This Proteus mirabilis (strain HI4320) protein is D-amino acid dehydrogenase.